The following is a 642-amino-acid chain: Threonine--tRNA ligase (642 aa).

A TGS domain is found at 1–61 (MPVITLPDGS…ENDAQLAIIT (61 aa)). The interval 243–534 (DHRKIGKQLD…LTEEFAGFFP (292 aa)) is catalytic. Residue lysine 286 is modified to N6-acetyllysine. Residues cysteine 334, histidine 385, and histidine 511 each coordinate Zn(2+).

The protein belongs to the class-II aminoacyl-tRNA synthetase family. As to quaternary structure, homodimer. It depends on Zn(2+) as a cofactor.

It localises to the cytoplasm. The enzyme catalyses tRNA(Thr) + L-threonine + ATP = L-threonyl-tRNA(Thr) + AMP + diphosphate + H(+). Functionally, catalyzes the attachment of threonine to tRNA(Thr) in a two-step reaction: L-threonine is first activated by ATP to form Thr-AMP and then transferred to the acceptor end of tRNA(Thr). Also edits incorrectly charged L-seryl-tRNA(Thr). This chain is Threonine--tRNA ligase, found in Escherichia fergusonii (strain ATCC 35469 / DSM 13698 / CCUG 18766 / IAM 14443 / JCM 21226 / LMG 7866 / NBRC 102419 / NCTC 12128 / CDC 0568-73).